The primary structure comprises 183 residues: Seminal plasma protein BSP-30 kDa (183 aa).

A signal peptide spans 1–25 (MAPLVGLFLIWAGASVFQQLHPVNG). The interval 23-47 (VNGGDIPDPGSKPTPPGMADELPTE) is disordered. 6 O-linked (GalNAc...) threonine glycosylation sites follow: T36, T46, T57, T58, T59, and T64. 2 consecutive Fibronectin type-II domains span residues 92–136 (FEGP…FCTE) and 137–183 (RDEP…WKYC). 4 cysteine pairs are disulfide-bonded: C97-C121, C111-C134, C142-C168, and C156-C183.

Belongs to the seminal plasma protein family.

The protein resides in the secreted. In terms of biological role, binds to spermatozoa upon ejaculation and may play a role in sperm capacitation. Displays heparin-, gelatin- and phospholipid-binding activities. The sequence is that of Seminal plasma protein BSP-30 kDa from Bos taurus (Bovine).